The chain runs to 259 residues: Acetylglutamate kinase (259 aa).

Residues 45–46 (GG), R67, and N159 contribute to the substrate site.

Belongs to the acetylglutamate kinase family. ArgB subfamily.

The protein localises to the cytoplasm. The enzyme catalyses N-acetyl-L-glutamate + ATP = N-acetyl-L-glutamyl 5-phosphate + ADP. The protein operates within amino-acid biosynthesis; L-arginine biosynthesis; N(2)-acetyl-L-ornithine from L-glutamate: step 2/4. Functionally, catalyzes the ATP-dependent phosphorylation of N-acetyl-L-glutamate. This Aeromonas hydrophila subsp. hydrophila (strain ATCC 7966 / DSM 30187 / BCRC 13018 / CCUG 14551 / JCM 1027 / KCTC 2358 / NCIMB 9240 / NCTC 8049) protein is Acetylglutamate kinase.